Here is a 257-residue protein sequence, read N- to C-terminus: Hydroxyacylglutathione hydrolase (257 aa).

The Zn(2+) site is built by H55, H57, D59, H60, H112, D129, and H167.

It belongs to the metallo-beta-lactamase superfamily. Glyoxalase II family. In terms of assembly, monomer. Requires Zn(2+) as cofactor.

The catalysed reaction is an S-(2-hydroxyacyl)glutathione + H2O = a 2-hydroxy carboxylate + glutathione + H(+). Its pathway is secondary metabolite metabolism; methylglyoxal degradation; (R)-lactate from methylglyoxal: step 2/2. Its function is as follows. Thiolesterase that catalyzes the hydrolysis of S-D-lactoyl-glutathione to form glutathione and D-lactic acid. This Pseudoalteromonas translucida (strain TAC 125) protein is Hydroxyacylglutathione hydrolase.